Here is a 366-residue protein sequence, read N- to C-terminus: Glucose 1-dehydrogenase (366 aa).

Residue Cys39 participates in Zn(2+) binding. Thr41 contacts substrate. The Zn(2+) site is built by His66 and Glu67. Asn89 is a binding site for substrate. Cys93, Cys96, Cys99, and Cys107 together coordinate Zn(2+). Substrate-binding residues include Glu114, Gln150, and Asp154. Gln150 is a Zn(2+) binding site. NADP(+) is bound by residues 189–192 (TGPI), 211–213 (NRR), 277–279 (FGF), 305–307 (LVN), and Lys354. Asn307 lines the substrate pocket.

Belongs to the zinc-containing alcohol dehydrogenase family. Glucose 1-dehydrogenase subfamily. In terms of assembly, homotetramer. It depends on Zn(2+) as a cofactor.

It catalyses the reaction D-glucose + NAD(+) = D-glucono-1,5-lactone + NADH + H(+). It carries out the reaction D-glucose + NADP(+) = D-glucono-1,5-lactone + NADPH + H(+). The catalysed reaction is D-galactose + NAD(+) = D-galactono-1,4-lactone + NADH + H(+). The enzyme catalyses D-galactose + NADP(+) = D-galactono-1,5-lactone + NADPH + H(+). It catalyses the reaction an aldopyranose + NAD(+) = aldono-1,5-lactone + NADH + H(+). It carries out the reaction an aldopyranose + NADP(+) = aldono-1,5-lactone + NADPH + H(+). Inhibited by EDTA in vitro. In terms of biological role, catalyzes the NAD(P)(+)-dependent oxidation of D-glucose to D-gluconate via gluconolactone. Displays broad substrate specificity since it is able to catalyze the oxidation of a number of alternative aldose sugars, such as D-galactose, D-xylose and L-arabinose, to the corresponding glyconate. Can utilize both NAD(+) and NADP(+) as electron acceptor. Physiologically, seems to be involved in the degradation of both glucose and galactose through a non-phosphorylative variant of the Entner-Doudoroff pathway. In Saccharolobus solfataricus (Sulfolobus solfataricus), this protein is Glucose 1-dehydrogenase.